Consider the following 427-residue polypeptide: Serine--tRNA ligase (427 aa).

Position 231 to 233 (231 to 233) interacts with L-serine; it reads TAE. 262–264 contributes to the ATP binding site; that stretch reads RSE. E285 provides a ligand contact to L-serine. 349–352 contributes to the ATP binding site; sequence EISS. An L-serine-binding site is contributed by S385.

The protein belongs to the class-II aminoacyl-tRNA synthetase family. Type-1 seryl-tRNA synthetase subfamily. Homodimer. The tRNA molecule binds across the dimer.

It localises to the cytoplasm. The catalysed reaction is tRNA(Ser) + L-serine + ATP = L-seryl-tRNA(Ser) + AMP + diphosphate + H(+). It catalyses the reaction tRNA(Sec) + L-serine + ATP = L-seryl-tRNA(Sec) + AMP + diphosphate + H(+). It functions in the pathway aminoacyl-tRNA biosynthesis; selenocysteinyl-tRNA(Sec) biosynthesis; L-seryl-tRNA(Sec) from L-serine and tRNA(Sec): step 1/1. In terms of biological role, catalyzes the attachment of serine to tRNA(Ser). Is also able to aminoacylate tRNA(Sec) with serine, to form the misacylated tRNA L-seryl-tRNA(Sec), which will be further converted into selenocysteinyl-tRNA(Sec). This is Serine--tRNA ligase from Brucella melitensis biotype 2 (strain ATCC 23457).